The sequence spans 1580 residues: Pentafunctional AROM polypeptide (1580 aa).

The 3-dehydroquinate synthase stretch occupies residues methionine 1 to asparagine 381. Residues aspartate 44–threonine 46, glutamate 81–lysine 84, glycine 114–valine 116, and aspartate 119 each bind NAD(+). Residue arginine 130 participates in 7-phospho-2-dehydro-3-deoxy-D-arabino-heptonate binding. Threonine 139–threonine 140 contributes to the NAD(+) binding site. 7-phospho-2-dehydro-3-deoxy-D-arabino-heptonate contacts are provided by aspartate 146 and lysine 152. An NAD(+)-binding site is contributed by lysine 161. Position 162 (asparagine 162) interacts with 7-phospho-2-dehydro-3-deoxy-D-arabino-heptonate. NAD(+) is bound by residues phenylalanine 179 to threonine 182 and asparagine 190. Glutamate 194 lines the Zn(2+) pocket. A 7-phospho-2-dehydro-3-deoxy-D-arabino-heptonate-binding site is contributed by lysine 247. Catalysis depends on glutamate 257, which acts as the Proton acceptor; for 3-dehydroquinate synthase activity. 7-phospho-2-dehydro-3-deoxy-D-arabino-heptonate is bound by residues arginine 261–asparagine 265 and histidine 268. Histidine 268 contributes to the Zn(2+) binding site. Residue histidine 272 is the Proton acceptor; for 3-dehydroquinate synthase activity of the active site. Residues histidine 284 and lysine 353 each contribute to the 7-phospho-2-dehydro-3-deoxy-D-arabino-heptonate site. Histidine 284 serves as a coordination point for Zn(2+). Residues valine 394–alanine 838 are EPSP synthase. The active-site For EPSP synthase activity is cysteine 820. Residues alanine 857–serine 1048 are shikimate kinase. Residue glycine 863–threonine 870 participates in ATP binding. Positions leucine 1049–glutamate 1269 are 3-dehydroquinase. Histidine 1172 (proton acceptor; for 3-dehydroquinate dehydratase activity) is an active-site residue. The Schiff-base intermediate with substrate; for 3-dehydroquinate dehydratase activity role is filled by lysine 1200. The tract at residues serine 1282–isoleucine 1580 is shikimate dehydrogenase.

In the N-terminal section; belongs to the sugar phosphate cyclases superfamily. Dehydroquinate synthase family. This sequence in the 2nd section; belongs to the EPSP synthase family. It in the 3rd section; belongs to the shikimate kinase family. The protein in the 4th section; belongs to the type-I 3-dehydroquinase family. In the C-terminal section; belongs to the shikimate dehydrogenase family. In terms of assembly, homodimer. It depends on Zn(2+) as a cofactor.

Its subcellular location is the cytoplasm. It catalyses the reaction 7-phospho-2-dehydro-3-deoxy-D-arabino-heptonate = 3-dehydroquinate + phosphate. The enzyme catalyses 3-dehydroquinate = 3-dehydroshikimate + H2O. It carries out the reaction shikimate + NADP(+) = 3-dehydroshikimate + NADPH + H(+). The catalysed reaction is shikimate + ATP = 3-phosphoshikimate + ADP + H(+). It catalyses the reaction 3-phosphoshikimate + phosphoenolpyruvate = 5-O-(1-carboxyvinyl)-3-phosphoshikimate + phosphate. It functions in the pathway metabolic intermediate biosynthesis; chorismate biosynthesis; chorismate from D-erythrose 4-phosphate and phosphoenolpyruvate: step 2/7. The protein operates within metabolic intermediate biosynthesis; chorismate biosynthesis; chorismate from D-erythrose 4-phosphate and phosphoenolpyruvate: step 3/7. It participates in metabolic intermediate biosynthesis; chorismate biosynthesis; chorismate from D-erythrose 4-phosphate and phosphoenolpyruvate: step 4/7. Its pathway is metabolic intermediate biosynthesis; chorismate biosynthesis; chorismate from D-erythrose 4-phosphate and phosphoenolpyruvate: step 5/7. It functions in the pathway metabolic intermediate biosynthesis; chorismate biosynthesis; chorismate from D-erythrose 4-phosphate and phosphoenolpyruvate: step 6/7. In terms of biological role, the AROM polypeptide catalyzes 5 consecutive enzymatic reactions in prechorismate polyaromatic amino acid biosynthesis. The sequence is that of Pentafunctional AROM polypeptide from Uncinocarpus reesii (strain UAMH 1704).